We begin with the raw amino-acid sequence, 384 residues long: Putative dioxygenase SSO1533 (384 aa).

3 residues coordinate Fe cation: H296, E302, and H332.

Belongs to the homogentisate dioxygenase family. Fe cation is required as a cofactor.

The sequence is that of Putative dioxygenase SSO1533 from Saccharolobus solfataricus (strain ATCC 35092 / DSM 1617 / JCM 11322 / P2) (Sulfolobus solfataricus).